The following is a 137-amino-acid chain: Protein archease (137 aa).

Ca(2+) contacts are provided by Asp-11, Asp-136, and Ile-137.

This sequence belongs to the archease family.

Activates the tRNA-splicing ligase complex by facilitating the enzymatic turnover of catalytic subunit RtcB. Acts by promoting the guanylylation of RtcB, a key intermediate step in tRNA ligation. Can also alter the NTP specificity of RtcB such that ATP, dGTP or ITP is used efficiently. This chain is Protein archease, found in Archaeoglobus fulgidus (strain ATCC 49558 / DSM 4304 / JCM 9628 / NBRC 100126 / VC-16).